The following is a 306-amino-acid chain: Bifunctional protein FolD (306 aa).

Residues 166 to 168 (GRS) and Ile232 contribute to the NADP(+) site.

Belongs to the tetrahydrofolate dehydrogenase/cyclohydrolase family. As to quaternary structure, homodimer.

The enzyme catalyses (6R)-5,10-methylene-5,6,7,8-tetrahydrofolate + NADP(+) = (6R)-5,10-methenyltetrahydrofolate + NADPH. It carries out the reaction (6R)-5,10-methenyltetrahydrofolate + H2O = (6R)-10-formyltetrahydrofolate + H(+). It participates in one-carbon metabolism; tetrahydrofolate interconversion. Catalyzes the oxidation of 5,10-methylenetetrahydrofolate to 5,10-methenyltetrahydrofolate and then the hydrolysis of 5,10-methenyltetrahydrofolate to 10-formyltetrahydrofolate. The sequence is that of Bifunctional protein FolD from Methylorubrum extorquens (strain CM4 / NCIMB 13688) (Methylobacterium extorquens).